We begin with the raw amino-acid sequence, 98 residues long: Omega-hexatoxin-Hr2b (98 aa).

The first 22 residues, 1 to 22, serve as a signal peptide directing secretion; that stretch reads MKFSKLSLTLALILTQVLFVLC. A propeptide spanning residues 24–56 is cleaved from the precursor; that stretch reads KINEDFMKHGLESQALHDEIRKPIDSENPDTER. 3 disulfide bridges follow: Cys60/Cys74, Cys67/Cys80, and Cys73/Cys85. Leu97 carries the post-translational modification Leucine amide.

This sequence belongs to the neurotoxin 15 family. 02 (omega-actx) subfamily. In terms of tissue distribution, expressed by the venom gland.

It localises to the secreted. Its function is as follows. Potent inhibitor of insect, but not mammalian, voltage-gated calcium channels (Cav). The polypeptide is Omega-hexatoxin-Hr2b (Atrax robustus (Sydney funnel-web spider)).